A 108-amino-acid polypeptide reads, in one-letter code: uncharacterized protein (108 aa).

The next 2 membrane-spanning stretches (helical) occupy residues 5-27 (TVYG…QLEI) and 83-105 (IFLM…LNIF).

The protein resides in the membrane. This is an uncharacterized protein from Schizosaccharomyces pombe (strain 972 / ATCC 24843) (Fission yeast).